Reading from the N-terminus, the 767-residue chain is Photosystem I P700 chlorophyll a apoprotein A1 (767 aa).

Positions 1-22 (MTISPPESGEKDKKILESPVKA) are disordered. Positions 8–22 (SGEKDKKILESPVKA) are enriched in basic and acidic residues. 8 consecutive transmembrane segments (helical) span residues 76–99 (IFSA…FHGA), 162–185 (LMAL…FHYH), 201–225 (LNHH…HIGA), 309–327 (VSHH…GHMY), 368–391 (RHAQ…HHMY), 407–433 (LGLF…IAMV), 455–477 (ALIS…LYIH), and 558–576 (LMIH…LILL). Residues Cys-600 and Cys-609 each coordinate [4Fe-4S] cluster. Transmembrane regions (helical) follow at residues 616 to 637 (HVFL…HFSW) and 681 to 703 (ISMY…MFLF). His-692 serves as a coordination point for divinylchlorophyll a'. The divinyl chlorophyll a site is built by Met-700 and Tyr-708. Trp-709 serves as a coordination point for phylloquinone. Residues 741 to 761 (AVGVTHFLVGGIATTWAFFHA) form a helical membrane-spanning segment.

This sequence belongs to the PsaA/PsaB family. The PsaA/B heterodimer binds the P700 divinyl chlorophyll special pair and subsequent electron acceptors. PSI consists of a core antenna complex that captures photons, and an electron transfer chain that converts photonic excitation into a charge separation. The cyanobacterial PSI reaction center is composed of one copy each of PsaA,B,C,D,E,F,I,J,K,L,M and X, and forms trimeric complexes. The cofactor is PSI electron transfer chain: 5 divinyl chlorophyll a, 1 divinyl chlorophyll a', 2 phylloquinones and 3 4Fe-4S clusters. PSI core antenna: 90 divinyl chlorophyll a, 22 carotenoids, 3 phospholipids and 1 galactolipid. P700 is a divinyl chlorophyll a/divinyl chlorophyll a' dimer, A0 is one or more divinyl chlorophyll a, A1 is one or both phylloquinones and FX is a shared 4Fe-4S iron-sulfur center..

The protein resides in the cellular thylakoid membrane. The catalysed reaction is reduced [plastocyanin] + hnu + oxidized [2Fe-2S]-[ferredoxin] = oxidized [plastocyanin] + reduced [2Fe-2S]-[ferredoxin]. In terms of biological role, psaA and PsaB bind P700, the primary electron donor of photosystem I (PSI), as well as the electron acceptors A0, A1 and FX. PSI is a plastocyanin/cytochrome c6-ferredoxin oxidoreductase, converting photonic excitation into a charge separation, which transfers an electron from the donor P700 chlorophyll pair to the spectroscopically characterized acceptors A0, A1, FX, FA and FB in turn. Oxidized P700 is reduced on the lumenal side of the thylakoid membrane by plastocyanin or cytochrome c6. This chain is Photosystem I P700 chlorophyll a apoprotein A1, found in Prochlorococcus marinus subsp. pastoris (strain CCMP1986 / NIES-2087 / MED4).